Here is a 297-residue protein sequence, read N- to C-terminus: Salivary glue protein Sgs-4 (297 aa).

The first 21 residues, Met1–Ser21, serve as a signal peptide directing secretion. Tandem repeats lie at residues Thr26 to Glu32, Thr33 to Glu39, Thr40 to Glu46, Thr47 to Glu53, Thr54 to Glu60, Thr61 to Glu67, Thr68 to Arg74, Thr75 to Lys81, Thr82 to Arg88, Thr89 to Lys95, Thr96 to Arg102, Thr103 to Arg109, Thr110 to Lys116, Thr117 to Lys123, Thr124 to Lys130, Thr131 to Arg137, Thr138 to Lys144, Thr145 to Arg151, Thr152 to Lys158, Thr159 to Lys165, and Thr166 to Lys172. The interval Thr26–Pro84 is disordered. The tract at residues Thr26–Lys179 is 22 X 7 AA approximate tandem repeats of T-[ETK]-[PT]-P-[RKT]-C-[ERK]. Basic and acidic residues predominate over residues Glu27–Arg58. Residues Cys59–Pro84 show a composition bias toward low complexity. A compositionally biased stretch (low complexity) spans Pro141–Glu174. Disordered stretches follow at residues Pro141–Gly218 and Pro243–Cys297. A 22; approximate repeat occupies Thr173–Lys179. Basic residues-rich tracts occupy residues Cys181–Arg208 and Asn282–Gln291.

As to expression, salivary gland.

It localises to the secreted. The polypeptide is Salivary glue protein Sgs-4 (Sgs4) (Drosophila melanogaster (Fruit fly)).